Reading from the N-terminus, the 374-residue chain is Serpin B8 (374 aa).

Belongs to the serpin family. Ov-serpin subfamily.

It localises to the cytoplasm. Has an important role in epithelial desmosome-mediated cell-cell adhesion. In Homo sapiens (Human), this protein is Serpin B8 (SERPINB8).